We begin with the raw amino-acid sequence, 48 residues long: Large ribosomal subunit protein bL32 (48 aa).

Basic residues predominate over residues 1 to 20 (MAVPKRRVSKTRAAKRRTHY). The segment at 1 to 48 (MAVPKRRVSKTRAAKRRTHYKVSLPMPIKDKDGSYKMPHRANPTTKEY) is disordered.

The protein belongs to the bacterial ribosomal protein bL32 family.

The chain is Large ribosomal subunit protein bL32 (rpmF) from Campylobacter jejuni subsp. jejuni serotype O:2 (strain ATCC 700819 / NCTC 11168).